A 261-amino-acid polypeptide reads, in one-letter code: Cytochrome c oxidase subunit 3 (261 aa).

Residues 1–15 are Mitochondrial matrix-facing; it reads MTHQTHAYHMVNPSP. A helical membrane pass occupies residues 16–34; that stretch reads WPLTGALSALLMTFGLIMW. Residues 35 to 40 lie on the Mitochondrial intermembrane side of the membrane; the sequence is FHFNST. A helical membrane pass occupies residues 41-66; that stretch reads ALLMLGLTTNMLTMYQWWRDIIREST. Residues 67–72 lie on the Mitochondrial matrix side of the membrane; the sequence is FQGHHT. The helical transmembrane segment at 73–105 threads the bilayer; that stretch reads PVVQKGLRYGMILFIISEVLFFTGFFWAFYHSS. Over 106–128 the chain is Mitochondrial intermembrane; the sequence is LAPTPELGGCWPPTGIHPLNPLE. A helical transmembrane segment spans residues 129–152; the sequence is VPLLNTSVLLASGVSITWAHHSLM. The Mitochondrial matrix segment spans residues 153-155; it reads EGH. Residues 156–183 form a helical membrane-spanning segment; the sequence is RNHMLQALFITIALGVYFTLLQASEYYE. Residues 184–190 are Mitochondrial intermembrane-facing; it reads APFTISD. A helical membrane pass occupies residues 191–223; sequence GVYGSTFFVATGFHGLHVIIGSTFLIVCFFRQL. Residues 224 to 232 lie on the Mitochondrial matrix side of the membrane; that stretch reads KFHFTSSHH. The chain crosses the membrane as a helical span at residues 233-256; sequence FGFEAAAWYWHFVDVVWLFLYVSI. At 257 to 261 the chain is on the mitochondrial intermembrane side; sequence YWWGS.

It belongs to the cytochrome c oxidase subunit 3 family. In terms of assembly, component of the cytochrome c oxidase (complex IV, CIV), a multisubunit enzyme composed of 14 subunits. The complex is composed of a catalytic core of 3 subunits MT-CO1, MT-CO2 and MT-CO3, encoded in the mitochondrial DNA, and 11 supernumerary subunits COX4I, COX5A, COX5B, COX6A, COX6B, COX6C, COX7A, COX7B, COX7C, COX8 and NDUFA4, which are encoded in the nuclear genome. The complex exists as a monomer or a dimer and forms supercomplexes (SCs) in the inner mitochondrial membrane with NADH-ubiquinone oxidoreductase (complex I, CI) and ubiquinol-cytochrome c oxidoreductase (cytochrome b-c1 complex, complex III, CIII), resulting in different assemblies (supercomplex SCI(1)III(2)IV(1) and megacomplex MCI(2)III(2)IV(2)).

Its subcellular location is the mitochondrion inner membrane. The catalysed reaction is 4 Fe(II)-[cytochrome c] + O2 + 8 H(+)(in) = 4 Fe(III)-[cytochrome c] + 2 H2O + 4 H(+)(out). Its function is as follows. Component of the cytochrome c oxidase, the last enzyme in the mitochondrial electron transport chain which drives oxidative phosphorylation. The respiratory chain contains 3 multisubunit complexes succinate dehydrogenase (complex II, CII), ubiquinol-cytochrome c oxidoreductase (cytochrome b-c1 complex, complex III, CIII) and cytochrome c oxidase (complex IV, CIV), that cooperate to transfer electrons derived from NADH and succinate to molecular oxygen, creating an electrochemical gradient over the inner membrane that drives transmembrane transport and the ATP synthase. Cytochrome c oxidase is the component of the respiratory chain that catalyzes the reduction of oxygen to water. Electrons originating from reduced cytochrome c in the intermembrane space (IMS) are transferred via the dinuclear copper A center (CU(A)) of subunit 2 and heme A of subunit 1 to the active site in subunit 1, a binuclear center (BNC) formed by heme A3 and copper B (CU(B)). The BNC reduces molecular oxygen to 2 water molecules using 4 electrons from cytochrome c in the IMS and 4 protons from the mitochondrial matrix. The sequence is that of Cytochrome c oxidase subunit 3 (MT-CO3) from Tragelaphus oryx (Eland).